The chain runs to 344 residues: Probable glucan endo-1,3-beta-glucosidase At4g16260 (344 aa).

An N-terminal signal peptide occupies residues 1–21 (MTTLFLLIALFITTILNPTSG). Glu-116 (proton donor) is an active-site residue. Glu-257 (nucleophile) is an active-site residue.

The protein belongs to the glycosyl hydrolase 17 family. As to quaternary structure, (Microbial infection) Interacts with the 30C02 effector protein (AC G3GD54) of the beet cyst nematode Heterodera schachtii. Interaction with the 30C02 effector protein may potentially suppress beta-1,3-glucanase activity and plant defense.

It localises to the secreted. The enzyme catalyses Hydrolysis of (1-&gt;3)-beta-D-glucosidic linkages in (1-&gt;3)-beta-D-glucans.. In terms of biological role, may be involved in plant defense against cyst nematode pathogens. This is Probable glucan endo-1,3-beta-glucosidase At4g16260 from Arabidopsis thaliana (Mouse-ear cress).